The primary structure comprises 326 residues: MATH domain and coiled-coil domain-containing protein At3g58370 (326 aa).

One can recognise an MATH domain in the interval 7–133; sequence DNKFTWVIKN…NGEVKIVVEI (127 aa). Positions 259-312 form a coiled coil; sequence LRLDWLEKKLAEVKAKKKKVETGKARLQRAEEELQKLNQKCLELKAFLEKENAD.

The sequence is that of MATH domain and coiled-coil domain-containing protein At3g58370 from Arabidopsis thaliana (Mouse-ear cress).